The chain runs to 302 residues: Stanniocalcin-2 (302 aa).

An N-terminal signal peptide occupies residues 1 to 24; sequence MCAERLGQFMTLALVLATFDPARG. The tract at residues 23–44 is disordered; it reads RGTDATNPPEGPQDRSPQQKGR. N-linked (GlcNAc...) asparagine glycans are attached at residues Asn73 and Asn74. The tract at residues 217–302 is disordered; that stretch reads RPPTAPPERQ…EQSEYSDIRR (86 aa). The segment covering 227-264 has biased composition (basic and acidic residues); that stretch reads PQVDRTKLSRAHHGEAGHHLPEPSSRETGRGAKGERGS. Phosphoserine occurs at positions 250 and 251. Thr254 is subject to Phosphothreonine.

The protein belongs to the stanniocalcin family. In terms of assembly, homodimer; disulfide-linked.

The protein localises to the secreted. Has an anti-hypocalcemic action on calcium and phosphate homeostasis. This is Stanniocalcin-2 (STC2) from Pongo abelii (Sumatran orangutan).